A 32-amino-acid chain; its full sequence is Kappa-conotoxin SrXIA (32 aa).

4 cysteine pairs are disulfide-bonded: Cys-1/Cys-15, Cys-8/Cys-20, Cys-14/Cys-24, and Cys-19/Cys-28. Residues Glu-9 and Glu-10 each carry the 4-carboxyglutamate modification. Residue Pro-32 is modified to Proline amide.

Belongs to the conotoxin I2 superfamily. Expressed by the venom duct.

The protein localises to the secreted. Functionally, kappa-conotoxins bind and inhibit voltage-gated potassium channels. This toxin inhibits Kv1.2/KCNA2 and Kv1.6/KCNA6. Produces stiffening of body, limbs and tail when injected intracranially into mice. The sequence is that of Kappa-conotoxin SrXIA from Conus spurius (Alphabet cone).